A 488-amino-acid polypeptide reads, in one-letter code: Glutamyl-tRNA(Gln) amidotransferase subunit A (488 aa).

Active-site charge relay system residues include lysine 77 and serine 152. Residue serine 176 is the Acyl-ester intermediate of the active site.

It belongs to the amidase family. GatA subfamily. In terms of assembly, heterotrimer of A, B and C subunits.

It catalyses the reaction L-glutamyl-tRNA(Gln) + L-glutamine + ATP + H2O = L-glutaminyl-tRNA(Gln) + L-glutamate + ADP + phosphate + H(+). In terms of biological role, allows the formation of correctly charged Gln-tRNA(Gln) through the transamidation of misacylated Glu-tRNA(Gln) in organisms which lack glutaminyl-tRNA synthetase. The reaction takes place in the presence of glutamine and ATP through an activated gamma-phospho-Glu-tRNA(Gln). The protein is Glutamyl-tRNA(Gln) amidotransferase subunit A of Latilactobacillus sakei subsp. sakei (strain 23K) (Lactobacillus sakei subsp. sakei).